The following is a 568-amino-acid chain: Zinc finger protein 648 (568 aa).

Residues 1–11 (MAQVDSQDRWG) show a composition bias toward basic and acidic residues. The segment at 1 to 106 (MAQVDSQDRW…MSGKASWSRD (106 aa)) is disordered. 10 C2H2-type zinc fingers span residues 279–301 (YACE…RRLH), 307–329 (YQCS…IRTH), 335–358 (YPCP…RNMH), 364–386 (FPCS…QRTH), 392–414 (FRCP…QRVH), 420–442 (FPCP…QTLH), 448–470 (FKCA…QRIH), 476–498 (FPCT…QQIH), 504–526 (FLCA…IRMH), and 532–554 (YQCE…RAKH). The disordered stretch occupies residues 548-568 (QRHRAKHGTCKKEPIPSSSDE).

This sequence belongs to the krueppel C2H2-type zinc-finger protein family.

It localises to the nucleus. Its function is as follows. May be involved in transcriptional regulation. In Homo sapiens (Human), this protein is Zinc finger protein 648 (ZNF648).